The sequence spans 599 residues: Elongation factor 4 (599 aa).

The tr-type G domain maps to 5-187 (STIRNFAIIA…AIVHRLPAPV (183 aa)). GTP contacts are provided by residues 17–22 (DHGKST) and 134–137 (NKAD).

Belongs to the TRAFAC class translation factor GTPase superfamily. Classic translation factor GTPase family. LepA subfamily.

The protein localises to the cell inner membrane. The catalysed reaction is GTP + H2O = GDP + phosphate + H(+). Its function is as follows. Required for accurate and efficient protein synthesis under certain stress conditions. May act as a fidelity factor of the translation reaction, by catalyzing a one-codon backward translocation of tRNAs on improperly translocated ribosomes. Back-translocation proceeds from a post-translocation (POST) complex to a pre-translocation (PRE) complex, thus giving elongation factor G a second chance to translocate the tRNAs correctly. Binds to ribosomes in a GTP-dependent manner. In Anaplasma marginale (strain Florida), this protein is Elongation factor 4.